Consider the following 1190-residue polypeptide: Phosphatidylinositol-3,5-bisphosphate 3-phosphatase MTMR4 (1190 aa).

Ser-8 carries the phosphoserine modification. One can recognise a Myotubularin phosphatase domain in the interval 153 to 570 (EHIRCRQEAE…RALHLWTAVY (418 aa)). 3 residues coordinate a 1,2-diacyl-sn-glycero-3-phospho-(1D-myo-inositol-3,5-bisphosphate): Asn-320, Asn-345, and Ile-346. Residues Asn-320, Asn-345, and Ile-346 each contribute to the a 1,2-diacyl-sn-glycero-3-phospho-(1D-myo-inositol-3-phosphate) site. The active-site Phosphocysteine intermediate is Cys-407. Residues Ser-408, Asp-409, Gly-410, Trp-411, Asp-412, Arg-413, Lys-449, and Arg-453 each coordinate a 1,2-diacyl-sn-glycero-3-phospho-(1D-myo-inositol-3,5-bisphosphate). The a 1,2-diacyl-sn-glycero-3-phospho-(1D-myo-inositol-3-phosphate) site is built by Ser-408, Asp-409, Gly-410, Trp-411, Asp-412, and Arg-413. Residue Arg-453 participates in a 1,2-diacyl-sn-glycero-3-phospho-(1D-myo-inositol-3-phosphate) binding. 2 positions are modified to phosphoserine: Ser-610 and Ser-629. Disordered stretches follow at residues 616–694 (SACD…FKGH), 724–749 (ETEA…GKPP), and 773–848 (DFPE…PSSV). A compositionally biased stretch (polar residues) spans 618 to 637 (CDTSSPLTRTSSDPNLNNHS). The segment covering 782–847 (LTGTPQQPHL…SISHQEQPSS (66 aa)) has biased composition (polar residues). The short motif at 999–1003 (VPPLY) is the PY-motif; substrate motif for NEDD4 element. The stretch at 1020 to 1052 (LRQIEAGYRQEVEQLRRQVRELQMRLDIRHCCA) forms a coiled coil. An FYVE-type zinc finger spans residues 1109-1169 (DHMASHCFNC…VCNSCYEHIQ (61 aa)). 8 residues coordinate Zn(2+): Cys-1115, Cys-1118, Cys-1131, Cys-1134, Cys-1139, Cys-1142, Cys-1161, and Cys-1164.

It belongs to the protein-tyrosine phosphatase family. Non-receptor class myotubularin subfamily. As to quaternary structure, homooligomeric. Forms MTMR3:MTMR4 heterooligomers; regulates the localization of both proteins. The MTMR3:MTMR4 heterooligomer can also recruit both CEP55 and PLK1; occurs during early mitosis, regulates the phosphorylation of CEP55 by PLK1 and its recruitment to the midbody where it can mediate cell abscission. Interacts with SMAD2 and SMAD3; negatively regulates TGF-beta signaling through SMAD2 and SMAD3 dephosphorylation and retention in endosomes. Interacts with SMAD1; negatively regulates BMP signaling through SMAD1 dephosphorylation and retention in endosomes. In terms of processing, ubiquitinated. Ubiquitination by NEDD4 probably leads to proteasomal degradation. Phosphorylated by CDK1 during mitosis.

It is found in the early endosome membrane. It localises to the recycling endosome membrane. The protein localises to the late endosome membrane. Its subcellular location is the cytoplasmic vesicle. The protein resides in the phagosome membrane. It catalyses the reaction a 1,2-diacyl-sn-glycero-3-phospho-(1D-myo-inositol-3-phosphate) + H2O = a 1,2-diacyl-sn-glycero-3-phospho-(1D-myo-inositol) + phosphate. The enzyme catalyses a 1,2-diacyl-sn-glycero-3-phospho-(1D-myo-inositol-3,5-bisphosphate) + H2O = a 1,2-diacyl-sn-glycero-3-phospho-(1D-myo-inositol-5-phosphate) + phosphate. The catalysed reaction is 1,2-dioctanoyl-sn-glycero-3-phospho-(1-D-myo-inositol-3-phosphate) + H2O = 1,2-dioctanoyl-sn-glycero-3-phospho-(1D-myo-inositol) + phosphate. It carries out the reaction 1,2-dioctanoyl-sn-glycero-3-phospho-(1D-myo-inositol-3,5-bisphosphate) + H2O = 1,2-dioctanoyl-sn-glycero-3-phospho-(1D-myo-inositol-5-phosphate) + phosphate. Functionally, lipid phosphatase that specifically dephosphorylates the D-3 position of phosphatidylinositol 3-phosphate and phosphatidylinositol 3,5-bisphosphate, generating phosphatidylinositol and phosphatidylinositol 5-phosphate. Decreases the levels of phosphatidylinositol 3-phosphate, a phospholipid found in cell membranes where it acts as key regulator of both cell signaling and intracellular membrane traffic, in a subset of endosomal membranes to negatively regulate both endocytic recycling and trafficking and/or maturation of endosomes toward lysosomes. Through phosphatidylinositol 3-phosphate turnover in phagosome membranes regulates phagocytosis and phagosome maturation. By decreasing phosphatidylinositol 3-monophosphate (PI3P) levels in immune cells it can also regulate the innate immune response. Beside its lipid phosphatase activity, can also function as a molecular adapter to regulate midbody abscission during mitotic cytokinesis. Can also negatively regulate TGF-beta and BMP signaling through Smad proteins dephosphorylation and retention in endosomes. This is Phosphatidylinositol-3,5-bisphosphate 3-phosphatase MTMR4 from Mus musculus (Mouse).